The following is a 373-amino-acid chain: Putative glutamate--cysteine ligase 2 (373 aa).

The protein belongs to the glutamate--cysteine ligase type 2 family. YbdK subfamily. In terms of assembly, homodimer.

It catalyses the reaction L-cysteine + L-glutamate + ATP = gamma-L-glutamyl-L-cysteine + ADP + phosphate + H(+). Functionally, ATP-dependent carboxylate-amine ligase which exhibits weak glutamate--cysteine ligase activity. This is Putative glutamate--cysteine ligase 2 from Enterobacter sp. (strain 638).